The primary structure comprises 949 residues: Translation initiation factor IF-2 (949 aa).

Disordered regions lie at residues 61-122 (IQAN…PIIK), 139-159 (VENTPKAVSHSQIEKAKQKLQ), and 171-284 (LTQS…NKSH). 2 stretches are compositionally biased toward basic and acidic residues: residues 112–122 (KKKEAPAPIIK) and 150–159 (QIEKAKQKLQ). Residues 174–190 (SNTNTTNNANSASNVSN) show a composition bias toward low complexity. A compositionally biased stretch (basic and acidic residues) spans 191-208 (AKKEISEVKKQEQEIKRH). A compositionally biased stretch (basic residues) spans 209–220 (ENIKRRTGFRVI). Positions 249 to 264 (EDIKKEWQEKDKQETK) are enriched in basic and acidic residues. In terms of domain architecture, tr-type G spans 448–617 (ERPPVVTIMG…LIQADIMELK (170 aa)). The interval 457–464 (GHVDHGKT) is G1. 457–464 (GHVDHGKT) provides a ligand contact to GTP. Residues 482 to 486 (GITQH) form a G2 region. A G3 region spans residues 503 to 506 (DTPG). Residues 503–507 (DTPGH) and 557–560 (NKMD) contribute to the GTP site. The G4 stretch occupies residues 557–560 (NKMD). A G5 region spans residues 593 to 595 (SAK).

Belongs to the TRAFAC class translation factor GTPase superfamily. Classic translation factor GTPase family. IF-2 subfamily.

It localises to the cytoplasm. Its function is as follows. One of the essential components for the initiation of protein synthesis. Protects formylmethionyl-tRNA from spontaneous hydrolysis and promotes its binding to the 30S ribosomal subunits. Also involved in the hydrolysis of GTP during the formation of the 70S ribosomal complex. The chain is Translation initiation factor IF-2 (infB) from Helicobacter pylori (strain J99 / ATCC 700824) (Campylobacter pylori J99).